A 166-amino-acid chain; its full sequence is Eukaryotic translation initiation factor 5A (166 aa).

The residue at position 52 (K52) is a Hypusine. Positions 99-125 (DREDPSKPAHLSLMDDEGETRDNLDMP) are disordered.

It belongs to the eIF-5A family. Lys-52 undergoes hypusination, a unique post-translational modification that consists in the addition of a butylamino group from spermidine to lysine side chain, leading to the formation of the unusual amino acid hypusine. eIF-5As are the only known proteins to undergo this modification, which is essential for their function. Hypusination is mediated by the consecutive action of deoxyhypusine synthase DHSc and deoxyhypusine hydroxylase DOHH.

It is found in the cytoplasm. Translation factor that promotes translation elongation and termination, particularly upon ribosome stalling at specific amino acid sequence contexts. Binds between the exit (E) and peptidyl (P) site of the ribosome and promotes rescue of stalled ribosome: specifically required for efficient translation of polyproline-containing peptides as well as other motifs that stall the ribosome. Acts as a ribosome quality control (RQC) cofactor by joining the RQC complex to facilitate peptidyl transfer during CAT tailing step. Required for cell growth during both bloodstream (BF) and insect procyclic (PF) life cycle stages and for survival of the bloodstream form. In Trypanosoma brucei brucei (strain 927/4 GUTat10.1), this protein is Eukaryotic translation initiation factor 5A.